Reading from the N-terminus, the 67-residue chain is Alpha-conotoxin G1.5 (67 aa).

An N-terminal signal peptide occupies residues Met1–Ser21. Residues Phe22–Lys47 constitute a propeptide that is removed on maturation. Intrachain disulfides connect Cys49-Cys55 and Cys50-Cys63. The residue at position 65 (Gln65) is a Glutamine amide.

It belongs to the conotoxin A superfamily. In terms of tissue distribution, expressed by the venom duct.

The protein localises to the secreted. Its function is as follows. Alpha-conotoxins act on postsynaptic membranes, they bind to the nicotinic acetylcholine receptors (nAChR) and thus inhibit them. Globular isomer (C1-C3; C2-C4) selectively inhibits neuronal (non-muscle) nAChR subtypes particularly human alpha-3-beta-2/CHRNA3-CHRNB2 (IC(50)=35.7 nM) and alpha-9-alpha-10/CHRNA9-CHRNA10 nAChRs (IC(50)=569 nM), while the ribbon isomer (C1-C4; C2-C3) shows weak inhibition on alpha-3-beta-2/CHRNA3-CHRNB2, but not on all other receptors tested. This Conus geographus (Geography cone) protein is Alpha-conotoxin G1.5.